The following is a 736-amino-acid chain: Oligopeptide transporter 6 (736 aa).

Helical transmembrane passes span 43–63 (MWVLGIGACIVLSFINQFFWY), 66–86 (MPLSITGISAQIAVVPLGHLM), 116–136 (VLITIFANSGAGSVYATHILS), 148–168 (FLPAFLVMITTQILGFGWAGL), 210–230 (FFLIVLVASFAYYIFPGYLFT), 258–278 (LGIGSIGFDWVTISAYLGSPL), 288–308 (VAIGFVLVMYIVTPVCYWLNI), 357–377 (FFAVTYGLGFATLSATIVHVL), 412–432 (VPLWWFLVILLLNIALIMFIS), 443–463 (WWGVLLACAIAISFTPLIGVI), 489–511 (PVANMCFKVYGYISMTQALTFIS), 527–547 (FMAQVAGTLVAVVVYTGTAWW), 602–622 (WFFLVGAIAPLLVWLATKMFP), 645–665 (ATAVNFTSWLIVAFIFGHFIF), and 678–698 (VLSGGLDAGSAFMTILLFLAL).

It belongs to the oligopeptide OPT transporter (TC 2.A.67.1) family. In terms of tissue distribution, expressed in flowers and roots, and at a low level in leaves and stems. Detected in the cambial zone of the vascular bundles and in the region of lateral root initiation. Low expression in the vascular network of the petals and high in the stamen filaments and the gynoecium.

It is found in the membrane. Its function is as follows. Involved in the translocation of tetra- and pentapeptides across the cellular membrane in an energy-dependent manner. Also involved in transport of glutathione derivatives and metal complexes, and may be involved in stress resistance. This Arabidopsis thaliana (Mouse-ear cress) protein is Oligopeptide transporter 6 (OPT6).